Reading from the N-terminus, the 274-residue chain is Sulfur carrier protein FdhD (274 aa).

The active-site Cysteine persulfide intermediate is C120.

The protein belongs to the FdhD family.

It localises to the cytoplasm. Required for formate dehydrogenase (FDH) activity. Acts as a sulfur carrier protein that transfers sulfur from IscS to the molybdenum cofactor prior to its insertion into FDH. This chain is Sulfur carrier protein FdhD, found in Burkholderia mallei (strain ATCC 23344).